The chain runs to 334 residues: Glutamyl-tRNA reductase (334 aa).

Substrate contacts are provided by residues Thr-49–Arg-52, Ser-107, Glu-112–Gln-114, and Gln-118. Catalysis depends on Cys-50, which acts as the Nucleophile. Gly-186–Gly-191 is an NADP(+) binding site.

The protein belongs to the glutamyl-tRNA reductase family. As to quaternary structure, homodimer.

The catalysed reaction is (S)-4-amino-5-oxopentanoate + tRNA(Glu) + NADP(+) = L-glutamyl-tRNA(Glu) + NADPH + H(+). It functions in the pathway porphyrin-containing compound metabolism; protoporphyrin-IX biosynthesis; 5-aminolevulinate from L-glutamyl-tRNA(Glu): step 1/2. Catalyzes the NADPH-dependent reduction of glutamyl-tRNA(Glu) to glutamate 1-semialdehyde (GSA). This Alkaliphilus oremlandii (strain OhILAs) (Clostridium oremlandii (strain OhILAs)) protein is Glutamyl-tRNA reductase.